The sequence spans 122 residues: Large ribosomal subunit protein uL14 (122 aa).

Belongs to the universal ribosomal protein uL14 family. In terms of assembly, part of the 50S ribosomal subunit. Forms a cluster with proteins L3 and L19. In the 70S ribosome, L14 and L19 interact and together make contacts with the 16S rRNA in bridges B5 and B8.

Its function is as follows. Binds to 23S rRNA. Forms part of two intersubunit bridges in the 70S ribosome. This chain is Large ribosomal subunit protein uL14, found in Chlorobium phaeobacteroides (strain DSM 266 / SMG 266 / 2430).